The following is a 263-amino-acid chain: Undecaprenyl-diphosphatase (263 aa).

Helical transmembrane passes span 40–60 (PGVLFDVLLHAGTMAAVLVYF), 87–107 (LLIIATVPTAIIGLSFKDFFV), 109–129 (AFHNLPLISLMLVVTGGLLFF), 186–206 (FSFLMALPAVFGATLVSLLEW), 219–239 (AGAVMAFLSGLASIHLLMGVV), and 243–263 (RLYAFAVYCWLMGGMFFAISS).

Belongs to the UppP family.

It is found in the cell inner membrane. The enzyme catalyses di-trans,octa-cis-undecaprenyl diphosphate + H2O = di-trans,octa-cis-undecaprenyl phosphate + phosphate + H(+). Catalyzes the dephosphorylation of undecaprenyl diphosphate (UPP). Confers resistance to bacitracin. The protein is Undecaprenyl-diphosphatase of Syntrophotalea carbinolica (strain DSM 2380 / NBRC 103641 / GraBd1) (Pelobacter carbinolicus).